A 255-amino-acid chain; its full sequence is DNA repair protein RecO (255 aa).

This sequence belongs to the RecO family.

Its function is as follows. Involved in DNA repair and RecF pathway recombination. The sequence is that of DNA repair protein RecO from Listeria monocytogenes serotype 4a (strain HCC23).